The sequence spans 242 residues: 1-(5-phosphoribosyl)-5-[(5-phosphoribosylamino)methylideneamino] imidazole-4-carboxamide isomerase (242 aa).

The active-site Proton acceptor is the aspartate 10. The Proton donor role is filled by aspartate 131.

It belongs to the HisA/HisF family.

It is found in the cytoplasm. The catalysed reaction is 1-(5-phospho-beta-D-ribosyl)-5-[(5-phospho-beta-D-ribosylamino)methylideneamino]imidazole-4-carboxamide = 5-[(5-phospho-1-deoxy-D-ribulos-1-ylimino)methylamino]-1-(5-phospho-beta-D-ribosyl)imidazole-4-carboxamide. The protein operates within amino-acid biosynthesis; L-histidine biosynthesis; L-histidine from 5-phospho-alpha-D-ribose 1-diphosphate: step 4/9. The polypeptide is 1-(5-phosphoribosyl)-5-[(5-phosphoribosylamino)methylideneamino] imidazole-4-carboxamide isomerase (Granulibacter bethesdensis (strain ATCC BAA-1260 / CGDNIH1)).